Here is a 209-residue protein sequence, read N- to C-terminus: Ribonuclease HII (209 aa).

The RNase H type-2 domain occupies 20 to 209; it reads DSEIGIDEVG…KSFLNKLNLI (190 aa). 3 residues coordinate a divalent metal cation: aspartate 26, glutamate 27, and aspartate 122.

It belongs to the RNase HII family. Mn(2+) is required as a cofactor. Mg(2+) serves as cofactor.

Its subcellular location is the cytoplasm. The enzyme catalyses Endonucleolytic cleavage to 5'-phosphomonoester.. Functionally, endonuclease that specifically degrades the RNA of RNA-DNA hybrids. The chain is Ribonuclease HII from Prochlorococcus marinus subsp. pastoris (strain CCMP1986 / NIES-2087 / MED4).